Here is a 431-residue protein sequence, read N- to C-terminus: UDP-N-acetylmuramate--L-alanine ligase (431 aa).

108-114 serves as a coordination point for ATP; it reads GSHGKTS.

Belongs to the MurCDEF family.

Its subcellular location is the cytoplasm. The catalysed reaction is UDP-N-acetyl-alpha-D-muramate + L-alanine + ATP = UDP-N-acetyl-alpha-D-muramoyl-L-alanine + ADP + phosphate + H(+). It functions in the pathway cell wall biogenesis; peptidoglycan biosynthesis. Functionally, cell wall formation. This chain is UDP-N-acetylmuramate--L-alanine ligase, found in Macrococcus caseolyticus (strain JCSC5402) (Macrococcoides caseolyticum).